A 136-amino-acid chain; its full sequence is ATP synthase epsilon chain, chloroplastic (136 aa).

Belongs to the ATPase epsilon chain family. F-type ATPases have 2 components, CF(1) - the catalytic core - and CF(0) - the membrane proton channel. CF(1) has five subunits: alpha(3), beta(3), gamma(1), delta(1), epsilon(1). CF(0) has three main subunits: a, b and c.

The protein resides in the plastid. It is found in the chloroplast thylakoid membrane. Produces ATP from ADP in the presence of a proton gradient across the membrane. The sequence is that of ATP synthase epsilon chain, chloroplastic from Cucumis sativus (Cucumber).